Here is a 20-residue protein sequence, read N- to C-terminus: Hemocyanin subunit 6 (20 aa).

This sequence belongs to the tyrosinase family. Hemocyanin subfamily. In terms of tissue distribution, hemolymph.

Its subcellular location is the secreted. The protein resides in the extracellular space. Hemocyanins are copper-containing oxygen carriers occurring freely dissolved in the hemolymph of many mollusks and arthropods. This is Hemocyanin subunit 6 from Homarus americanus (American lobster).